We begin with the raw amino-acid sequence, 102 residues long: Protein S100-A11 (102 aa).

S2 carries the post-translational modification Phosphoserine. T7 carries the post-translational modification Phosphothreonine. EF-hand domains are found at residues 12 to 47 (ESLIAVFQKYAGKDGHSVTLSKTEFLSFMNTELAAF) and 52 to 87 (KDPGVLDRMMKKLDLNSDGQLDFQEFLNLIGGLAVA). K24 carries the N6-acetyllysine modification. Positions 28, 30, 35, 65, 67, 69, 71, and 76 each coordinate Ca(2+).

Belongs to the S-100 family. In terms of assembly, homodimer; disulfide-linked. Phosphorylation at Thr-7 significantly suppresses homodimerization and promotes association with NCL/nucleolin which induces nuclear translocation. Smooth muscle and non-muscle tissues.

It is found in the cytoplasm. The protein resides in the nucleus. Functionally, facilitates the differentiation and the cornification of keratinocytes. The polypeptide is Protein S100-A11 (S100A11) (Oryctolagus cuniculus (Rabbit)).